The following is a 177-amino-acid chain: Large ribosomal subunit protein uL6 (177 aa).

In terms of assembly, part of the 50S ribosomal subunit.

Its function is as follows. This protein binds to the 23S rRNA, and is important in its secondary structure. It is located near the subunit interface in the base of the L7/L12 stalk, and near the tRNA binding site of the peptidyltransferase center. This is Large ribosomal subunit protein uL6 from Rhodopseudomonas palustris (strain ATCC BAA-98 / CGA009).